The chain runs to 1162 residues: Carbamoyl phosphate synthase large chain (1162 aa).

Residues 1–456 (MPKRTDIKSI…SLQKALRGLE (456 aa)) form a carboxyphosphate synthetic domain region. 12 residues coordinate ATP: R129, R222, G228, G229, E261, V263, E268, G294, V295, H296, Q338, and E352. One can recognise an ATP-grasp 1 domain in the interval 186 to 381 (ETEWQLGEVE…IAKVAAKLAV (196 aa)). The Mg(2+) site is built by Q338, E352, and N354. Positions 338, 352, and 354 each coordinate Mn(2+). The oligomerization domain stretch occupies residues 457 to 613 (TGLTGFDEIA…PFVGQPRSEA (157 aa)). Residues 614-1025 (EVSDRKKVVI…AFAKAQLGAG (412 aa)) are carbamoyl phosphate synthetic domain. An ATP-grasp 2 domain is found at 742 to 954 (QKLLIKLDLN…IAKVAARIMA (213 aa)). Positions 778, 838, 840, 845, 870, 871, 872, 873, 913, and 925 each coordinate ATP. 3 residues coordinate Mg(2+): Q913, E925, and N927. Q913, E925, and N927 together coordinate Mn(2+). One can recognise an MGS-like domain in the interval 1026–1162 (VELPREGTVF…VRPLQDYFRS (137 aa)). The segment at 1026-1162 (VELPREGTVF…VRPLQDYFRS (137 aa)) is allosteric domain.

The protein belongs to the CarB family. As to quaternary structure, composed of two chains; the small (or glutamine) chain promotes the hydrolysis of glutamine to ammonia, which is used by the large (or ammonia) chain to synthesize carbamoyl phosphate. Tetramer of heterodimers (alpha,beta)4. The cofactor is Mg(2+). Requires Mn(2+) as cofactor.

It carries out the reaction hydrogencarbonate + L-glutamine + 2 ATP + H2O = carbamoyl phosphate + L-glutamate + 2 ADP + phosphate + 2 H(+). It catalyses the reaction hydrogencarbonate + NH4(+) + 2 ATP = carbamoyl phosphate + 2 ADP + phosphate + 2 H(+). It participates in amino-acid biosynthesis; L-arginine biosynthesis; carbamoyl phosphate from bicarbonate: step 1/1. Its pathway is pyrimidine metabolism; UMP biosynthesis via de novo pathway; (S)-dihydroorotate from bicarbonate: step 1/3. Large subunit of the glutamine-dependent carbamoyl phosphate synthetase (CPSase). CPSase catalyzes the formation of carbamoyl phosphate from the ammonia moiety of glutamine, carbonate, and phosphate donated by ATP, constituting the first step of 2 biosynthetic pathways, one leading to arginine and/or urea and the other to pyrimidine nucleotides. The large subunit (synthetase) binds the substrates ammonia (free or transferred from glutamine from the small subunit), hydrogencarbonate and ATP and carries out an ATP-coupled ligase reaction, activating hydrogencarbonate by forming carboxy phosphate which reacts with ammonia to form carbamoyl phosphate. The polypeptide is Carbamoyl phosphate synthase large chain (Brucella suis biovar 1 (strain 1330)).